The sequence spans 183 residues: MLTMKDIIRDGHPTLRQKAAELELPLTKEEKETLIAMREFLVNSQDEEIAKRYGLRSGVGLAAPQINISKRMIAVLIPDDGSGKSYDYMLVNPKIVSHSVQEAYLPTGEGCLSVDDNVAGLVHRHNRITIKAKDIEGNDIQLRLKGYPAIVFQHEIDHLNGVMFYDHIDKDHPLQPHTDAVEV.

Fe cation-binding residues include Cys111 and His154. Glu155 is a catalytic residue. Position 158 (His158) interacts with Fe cation.

It belongs to the polypeptide deformylase family. It depends on Fe(2+) as a cofactor.

The catalysed reaction is N-terminal N-formyl-L-methionyl-[peptide] + H2O = N-terminal L-methionyl-[peptide] + formate. In terms of biological role, removes the formyl group from the N-terminal Met of newly synthesized proteins. Requires at least a dipeptide for an efficient rate of reaction. N-terminal L-methionine is a prerequisite for activity but the enzyme has broad specificity at other positions. This is Peptide deformylase from Staphylococcus aureus (strain COL).